The following is a 400-amino-acid chain: Tryptophan synthase beta chain (400 aa).

K92 is modified (N6-(pyridoxal phosphate)lysine).

Belongs to the TrpB family. As to quaternary structure, tetramer of two alpha and two beta chains. It depends on pyridoxal 5'-phosphate as a cofactor.

It catalyses the reaction (1S,2R)-1-C-(indol-3-yl)glycerol 3-phosphate + L-serine = D-glyceraldehyde 3-phosphate + L-tryptophan + H2O. Its pathway is amino-acid biosynthesis; L-tryptophan biosynthesis; L-tryptophan from chorismate: step 5/5. In terms of biological role, the beta subunit is responsible for the synthesis of L-tryptophan from indole and L-serine. The protein is Tryptophan synthase beta chain of Chromobacterium violaceum (strain ATCC 12472 / DSM 30191 / JCM 1249 / CCUG 213 / NBRC 12614 / NCIMB 9131 / NCTC 9757 / MK).